A 229-amino-acid polypeptide reads, in one-letter code: Urease accessory protein UreF (229 aa).

It belongs to the UreF family. In terms of assembly, ureD, UreF and UreG form a complex that acts as a GTP-hydrolysis-dependent molecular chaperone, activating the urease apoprotein by helping to assemble the nickel containing metallocenter of UreC. The UreE protein probably delivers the nickel.

It localises to the cytoplasm. Required for maturation of urease via the functional incorporation of the urease nickel metallocenter. The chain is Urease accessory protein UreF from Staphylococcus aureus (strain USA300).